Consider the following 124-residue polypeptide: Small ribosomal subunit protein uS13 (124 aa).

The segment at 96-124 is disordered; it reads LPVRGQRTKTNARTRKGPRRTVAGKKKAK.

Belongs to the universal ribosomal protein uS13 family. As to quaternary structure, part of the 30S ribosomal subunit. Forms a loose heterodimer with protein S19. Forms two bridges to the 50S subunit in the 70S ribosome.

Functionally, located at the top of the head of the 30S subunit, it contacts several helices of the 16S rRNA. In the 70S ribosome it contacts the 23S rRNA (bridge B1a) and protein L5 of the 50S subunit (bridge B1b), connecting the 2 subunits; these bridges are implicated in subunit movement. Contacts the tRNAs in the A and P-sites. The sequence is that of Small ribosomal subunit protein uS13 from Symbiobacterium thermophilum (strain DSM 24528 / JCM 14929 / IAM 14863 / T).